Reading from the N-terminus, the 85-residue chain is Selenoprotein W (85 aa).

A cross-link (cysteinyl-selenocysteine (Cys-Sec); redox-active) is located at residues 10–13; sequence CGAU. A non-standard amino acid (selenocysteine) is located at residue U13.

The protein belongs to the SelWTH family. Selenoprotein W subfamily. As to expression, expressed ubiquitously with predominant expression in the pituitary, spinal cord, sciatic nerve, cerebral cortex, cerebral nuclei, thalamus, cerebellum, muscle, cartilage, trachea, gizzard and artery. Weakly expressed in pancreas, testis, ovary, kidney and veins.

The protein localises to the cytoplasm. Functionally, plays a role as a glutathione (GSH)-dependent antioxidant. May be involved in a redox-related process. May play a role in the myopathies of selenium deficiency. The chain is Selenoprotein W from Gallus gallus (Chicken).